The sequence spans 213 residues: MAIKVHGSPMSTATMRVAACLIEKELDFEFVPVDMASGEHKKHPYLSLNPFGQVPAFEDGDLKLFESRAITQYIAHVYADNGYQLILQDPKKMPSMSVWMEVEGQKFEPPATKLTWELGIKPIIGMTTDDAAVKESEAQLSKVLDIYETQLAESKYLGGDSFTLVDLHHIPNIYYLMSSKVKEVFDSRPRVSAWCADILARPAWVKGLEKLQK.

Residues 1–82 enclose the GST N-terminal domain; sequence MAIKVHGSPM…YIAHVYADNG (82 aa). Glutathione is bound by residues serine 11, 12 to 13, 40 to 41, 53 to 54, and 66 to 67; these read TA, HK, QV, and ES. The 125-residue stretch at 89–213 folds into the GST C-terminal domain; that stretch reads DPKKMPSMSV…WVKGLEKLQK (125 aa).

It belongs to the GST superfamily. Phi family.

The catalysed reaction is RX + glutathione = an S-substituted glutathione + a halide anion + H(+). Conjugation of reduced glutathione to a wide number of exogenous and endogenous hydrophobic electrophiles. In Nicotiana tabacum (Common tobacco), this protein is Glutathione S-transferase PARB.